A 229-amino-acid polypeptide reads, in one-letter code: Histidine biosynthesis bifunctional protein HisIE (229 aa).

Residues 1–127 are phosphoribosyl-AMP cyclohydrolase; it reads MNTLLDGIDW…APDTSALYGV (127 aa). The segment at 128–229 is phosphoribosyl-ATP pyrophosphohydrolase; the sequence is VDRLYHELLA…IAEKNSRKDS (102 aa).

In the N-terminal section; belongs to the PRA-CH family. It in the C-terminal section; belongs to the PRA-PH family.

The protein resides in the cytoplasm. It catalyses the reaction 1-(5-phospho-beta-D-ribosyl)-ATP + H2O = 1-(5-phospho-beta-D-ribosyl)-5'-AMP + diphosphate + H(+). The enzyme catalyses 1-(5-phospho-beta-D-ribosyl)-5'-AMP + H2O = 1-(5-phospho-beta-D-ribosyl)-5-[(5-phospho-beta-D-ribosylamino)methylideneamino]imidazole-4-carboxamide. The protein operates within amino-acid biosynthesis; L-histidine biosynthesis; L-histidine from 5-phospho-alpha-D-ribose 1-diphosphate: step 2/9. It functions in the pathway amino-acid biosynthesis; L-histidine biosynthesis; L-histidine from 5-phospho-alpha-D-ribose 1-diphosphate: step 3/9. The chain is Histidine biosynthesis bifunctional protein HisIE from Wolinella succinogenes (strain ATCC 29543 / DSM 1740 / CCUG 13145 / JCM 31913 / LMG 7466 / NCTC 11488 / FDC 602W) (Vibrio succinogenes).